Reading from the N-terminus, the 144-residue chain is Large ribosomal subunit protein uL16 (144 aa).

The span at 1–14 shows a compositional bias: basic residues; that stretch reads MLTPKRVKHRKQHR. The segment at 1-22 is disordered; that stretch reads MLTPKRVKHRKQHRPSLAGKAN.

It belongs to the universal ribosomal protein uL16 family. In terms of assembly, part of the 50S ribosomal subunit.

In terms of biological role, binds 23S rRNA and is also seen to make contacts with the A and possibly P site tRNAs. The polypeptide is Large ribosomal subunit protein uL16 (Syntrophomonas wolfei subsp. wolfei (strain DSM 2245B / Goettingen)).